Reading from the N-terminus, the 146-residue chain is Inner membrane protein YdgK (146 aa).

Over 1 to 12 the chain is Cytoplasmic; sequence MTTTTPQRIGGW. The helical transmembrane segment at 13 to 33 threads the bilayer; that stretch reads LLGPLAWLLVALLSTTLALLL. Topologically, residues 34–59 are periplasmic; the sequence is YTAALSSPQTFQTLGGQALTTQILWG. The helical transmembrane segment at 60-80 threads the bilayer; sequence VSFITAIALWYYTLWLTIAFF. Residues 81-89 lie on the Cytoplasmic side of the membrane; the sequence is KRRRCVPKH. Residues 90 to 110 traverse the membrane as a helical segment; that stretch reads YIIWLLISVLLAVKAFAFSPV. Topologically, residues 111 to 112 are periplasmic; the sequence is ED. Residues 113–133 form a helical membrane-spanning segment; that stretch reads GIAVRQLLFTLLATALIVPYF. The Cytoplasmic portion of the chain corresponds to 134–146; it reads KRSSRVKATFVNP.

This sequence to Synechocystis PCC 6803 sll0481.

The protein localises to the cell inner membrane. The protein is Inner membrane protein YdgK (ydgK) of Escherichia coli (strain K12).